We begin with the raw amino-acid sequence, 226 residues long: PKHD-type hydroxylase Abu_0724 (226 aa).

One can recognise a Fe2OG dioxygenase domain in the interval 78–178 (HIISPFFNKY…RMVSFMWIQS (101 aa)). Positions 96, 98, and 159 each coordinate Fe cation. Arg169 contacts 2-oxoglutarate.

The cofactor is Fe(2+). L-ascorbate is required as a cofactor.

This Aliarcobacter butzleri (strain RM4018) (Arcobacter butzleri) protein is PKHD-type hydroxylase Abu_0724.